A 296-amino-acid chain; its full sequence is Decaprenyl diphosphate synthase (296 aa).

The tract at residues 1–24 (MARDARKRTSSNFPQLPPAPDDYP) is disordered. The active site involves Asp76. A Mg(2+)-binding site is contributed by Asp76. Substrate contacts are provided by residues 76–80 (DGNGR), Trp81, Arg89, His93, 121–124 (STEN), Trp125, Arg127, Arg168, Arg244, and 250–252 (RSS). Asn124 functions as the Proton acceptor in the catalytic mechanism. Position 263 (Glu263) interacts with Mg(2+). A substrate-binding site is contributed by 292–294 (RFG).

It belongs to the UPP synthase family. In terms of assembly, homodimer. Mg(2+) is required as a cofactor. Mn(2+) serves as cofactor.

The protein resides in the cell membrane. It carries out the reaction (2Z,6E)-farnesyl diphosphate + 7 isopentenyl diphosphate = (2Z,6Z,10Z,14Z,18Z,22Z,26Z,30Z,34E)-decaprenyl diphosphate + 7 diphosphate. The enzyme catalyses n isopentenyl diphosphate + (2E,6E)-farnesyl diphosphate = a di-trans,poly-cis-polyprenyl diphosphate + n diphosphate. With respect to regulation, activated by dithiothreitol and inhibited by EDTA. Functionally, catalyzes the sequential condensation of isopentenyl diphosphate (IPP) in the cis configuration with (2Z,6E)-farnesyl diphosphate (Z-FPP or EZ-FPP) generating the 50 carbon product trans,polycis-decaprenyl diphosphate. When (2E,6E)-farnesyl diphosphate (E-FPP or EE-FPP) is used in vitro, both primary products decaprenyl diphosphate and (2E,6E,10E)-geranylgeranyl diphosphate (EEE-GGPP) are synthesized. M.tuberculosis does not synthesize (2E,6E,10Z)-geranylgeranyl diphosphate (EEZ-GGPP) and heptaprenyl diphosphate. Can also accept many different allylic substrates, including E-geranyl diphosphate (E-GPP), neryl diphosphate (NPP), and all-trans-geranyl-geranyl diphosphate. In Mycobacterium tuberculosis (strain ATCC 25618 / H37Rv), this protein is Decaprenyl diphosphate synthase (uppS).